The sequence spans 557 residues: Dihydroxy-acid dehydratase (557 aa).

Asp78 provides a ligand contact to Mg(2+). Cys119 lines the [2Fe-2S] cluster pocket. Mg(2+) contacts are provided by Asp120 and Lys121. Lys121 carries the N6-carboxylysine modification. Cys192 is a [2Fe-2S] cluster binding site. Position 442 (Glu442) interacts with Mg(2+). Ser468 serves as the catalytic Proton acceptor.

The protein belongs to the IlvD/Edd family. Homodimer. It depends on [2Fe-2S] cluster as a cofactor. Mg(2+) serves as cofactor.

The catalysed reaction is (2R)-2,3-dihydroxy-3-methylbutanoate = 3-methyl-2-oxobutanoate + H2O. The enzyme catalyses (2R,3R)-2,3-dihydroxy-3-methylpentanoate = (S)-3-methyl-2-oxopentanoate + H2O. It functions in the pathway amino-acid biosynthesis; L-isoleucine biosynthesis; L-isoleucine from 2-oxobutanoate: step 3/4. It participates in amino-acid biosynthesis; L-valine biosynthesis; L-valine from pyruvate: step 3/4. In terms of biological role, functions in the biosynthesis of branched-chain amino acids. Catalyzes the dehydration of (2R,3R)-2,3-dihydroxy-3-methylpentanoate (2,3-dihydroxy-3-methylvalerate) into 2-oxo-3-methylpentanoate (2-oxo-3-methylvalerate) and of (2R)-2,3-dihydroxy-3-methylbutanoate (2,3-dihydroxyisovalerate) into 2-oxo-3-methylbutanoate (2-oxoisovalerate), the penultimate precursor to L-isoleucine and L-valine, respectively. This Bacillus cereus (strain Q1) protein is Dihydroxy-acid dehydratase.